A 311-amino-acid polypeptide reads, in one-letter code: Homoserine O-acetyltransferase (311 aa).

Cys142 (acyl-thioester intermediate) is an active-site residue. Substrate is bound by residues Lys163 and Ser192. His235 serves as the catalytic Proton acceptor. Glu237 is a catalytic residue. Position 249 (Arg249) interacts with substrate.

Belongs to the MetA family.

It localises to the cytoplasm. The enzyme catalyses L-homoserine + acetyl-CoA = O-acetyl-L-homoserine + CoA. It functions in the pathway amino-acid biosynthesis; L-methionine biosynthesis via de novo pathway; O-acetyl-L-homoserine from L-homoserine: step 1/1. Its function is as follows. Transfers an acetyl group from acetyl-CoA to L-homoserine, forming acetyl-L-homoserine. The protein is Homoserine O-acetyltransferase of Lysinibacillus sphaericus (strain C3-41).